Here is a 129-residue protein sequence, read N- to C-terminus: Methylmalonyl-CoA decarboxylase subunit gamma (129 aa).

Low complexity-rich tracts occupy residues 24-39 (APAA…APAP) and 49-58 (PAAAAAPVPA). The tract at residues 24-58 (APAAAPKAAPAAAPAPKAAPAPAPAPAAAAAPVPA) is disordered. The region spanning 51 to 129 (AAAAPVPAGA…STGDDMVVLG (79 aa)) is the Biotinyl-binding domain. An N6-biotinyllysine modification is found at Lys95.

As to quaternary structure, the methylmalonyl-CoA decarboxylase is composed of five subunits: the carboxyltransferase alpha subunit (MmdA), the tunnel beta subunit (MmdB), the biotin-containing gamma subunit (MmdC), and the delta (MmdD) and epsilon (MmdE) subunits. Requires biotin as cofactor.

The protein localises to the cell membrane. It carries out the reaction (S)-methylmalonyl-CoA + Na(+)(in) + H(+)(out) = propanoyl-CoA + Na(+)(out) + CO2. Its activity is regulated as follows. Completely inhibited by avidin. Biotin-containing subunit of the sodium ion pump methylmalonyl-CoA decarboxylase, which converts the chemical energy of a decarboxylation reaction into an electrochemical gradient of Na(+) ions across the cytoplasmic membrane, thereby creating a sodium ion motive force that is used for ATP synthesis. Can also convert malonyl-CoA into acetyl-CoA. This Veillonella parvula (Staphylococcus parvulus) protein is Methylmalonyl-CoA decarboxylase subunit gamma.